The chain runs to 150 residues: Classical arabinogalactan protein 6 (150 aa).

Residues 1 to 20 form the signal peptide; sequence MARQFVVLVLLTLTIATAFA. Low complexity-rich tracts occupy residues 19 to 75 and 85 to 98; these read FAAD…SPAA and SASS…APTV. Residues 19–131 are disordered; it reads FAADAPSASP…ESPKSGAVTT (113 aa). Residue S126 is the site of GPI-anchor amidated serine attachment. Residues 127–150 constitute a propeptide, removed in mature form; sequence GAVTTAKFSVVGTVATVGFFFFSF.

This sequence belongs to the classical AGP family. O-glycosylated on the hydroxyproline residues. Expressed in the anthers.

The protein resides in the cell membrane. Functionally, proteoglycan that seems to be implicated in diverse developmental roles such as differentiation, cell-cell recognition, embryogenesis and programmed cell death. Plays an important role during the formation of the nexine layer of the pollen wall. This chain is Classical arabinogalactan protein 6 (AGP6), found in Arabidopsis thaliana (Mouse-ear cress).